The primary structure comprises 298 residues: UDP-N-acetylenolpyruvoylglucosamine reductase (298 aa).

An FAD-binding PCMH-type domain is found at 26–190; sequence RAGGPAERLY…VAAVLDLEPG (165 aa). Arg170 is a catalytic residue. The active-site Proton donor is Ser219. Glu289 is a catalytic residue.

This sequence belongs to the MurB family. It depends on FAD as a cofactor.

Its subcellular location is the cytoplasm. The enzyme catalyses UDP-N-acetyl-alpha-D-muramate + NADP(+) = UDP-N-acetyl-3-O-(1-carboxyvinyl)-alpha-D-glucosamine + NADPH + H(+). The protein operates within cell wall biogenesis; peptidoglycan biosynthesis. In terms of biological role, cell wall formation. The polypeptide is UDP-N-acetylenolpyruvoylglucosamine reductase (Alkalilimnicola ehrlichii (strain ATCC BAA-1101 / DSM 17681 / MLHE-1)).